The following is a 517-amino-acid chain: Probable bifunctional methylthioribulose-1-phosphate dehydratase/enolase-phosphatase E1 (517 aa).

Residues 1–242 form a methylthioribulose-1-phosphate dehydratase region; that stretch reads MACSGCSCEA…CIKLYQLGID (242 aa). Residue Cys114 participates in substrate binding. His132 and His134 together coordinate Zn(2+). The Proton donor/acceptor; for methylthioribulose-1-phosphate dehydratase activity role is filled by Glu157. Zn(2+) is bound at residue His207. Positions 278 to 517 are enolase-phosphatase E1; that stretch reads VVLDIEGTTT…FRTIKSFSEI (240 aa). Mg(2+) contacts are provided by Asp281 and Glu283. Residues 416-417 and Lys450 contribute to the substrate site; that span reads SS. Asp476 contributes to the Mg(2+) binding site.

In the N-terminal section; belongs to the aldolase class II family. MtnB subfamily. It in the C-terminal section; belongs to the HAD-like hydrolase superfamily. MasA/MtnC family. Zn(2+) is required as a cofactor. Requires Mg(2+) as cofactor.

It catalyses the reaction 5-(methylsulfanyl)-D-ribulose 1-phosphate = 5-methylsulfanyl-2,3-dioxopentyl phosphate + H2O. It carries out the reaction 5-methylsulfanyl-2,3-dioxopentyl phosphate + H2O = 1,2-dihydroxy-5-(methylsulfanyl)pent-1-en-3-one + phosphate. The protein operates within amino-acid biosynthesis; L-methionine biosynthesis via salvage pathway; L-methionine from S-methyl-5-thio-alpha-D-ribose 1-phosphate: step 2/6. It functions in the pathway amino-acid biosynthesis; L-methionine biosynthesis via salvage pathway; L-methionine from S-methyl-5-thio-alpha-D-ribose 1-phosphate: step 3/6. Its pathway is amino-acid biosynthesis; L-methionine biosynthesis via salvage pathway; L-methionine from S-methyl-5-thio-alpha-D-ribose 1-phosphate: step 4/6. This chain is Probable bifunctional methylthioribulose-1-phosphate dehydratase/enolase-phosphatase E1, found in Zea mays (Maize).